Reading from the N-terminus, the 206-residue chain is Platelet glycoprotein Ib beta chain (206 aa).

A signal peptide spans 1–25 (MGSGPRGALSLLLLLLAPPSRPAAG). 2 cysteine pairs are disulfide-bonded: Cys26–Cys32 and Cys30–Cys39. In terms of domain architecture, LRRNT spans 27 to 55 (PAPCSCAGTLVDCGRRGLTWASLPTAFPV). Residues 27–147 (PAPCSCAGTL…RAACAPGPLC (121 aa)) lie on the Extracellular side of the membrane. An LRR repeat occupies 60-83 (LVLTGNNLTALPPGLLDALPALRT). An N-linked (GlcNAc...) asparagine glycan is attached at Asn66. Residues 89–143 (NPWRCDCRLVPLRAWLAGRPERAPYRDLRCVAPPALRGRLLPYLAEDELRAACAP) form the LRRCT domain. 2 disulfide bridges follow: Cys93–Cys118 and Cys95–Cys141. The chain crosses the membrane as a helical span at residues 148-172 (WGALAAQLALLGLGLLHALLLVLLL). The Cytoplasmic portion of the chain corresponds to 173-206 (CRLRRLRARARARAAARLSLTDPLVAERAGTDES). Phosphoserine; by PKA is present on Ser191. Thr193 carries the post-translational modification Phosphothreonine.

As to quaternary structure, two GP-Ib beta are disulfide-linked to one GP-Ib alpha. GP-IX is complexed with the GP-Ib heterodimer via a non covalent linkage. Interacts with TRAF4. As to expression, expressed in heart and brain.

Its subcellular location is the membrane. In terms of biological role, gp-Ib, a surface membrane protein of platelets, participates in the formation of platelet plugs by binding to von Willebrand factor, which is already bound to the subendothelium. This chain is Platelet glycoprotein Ib beta chain (GP1BB), found in Homo sapiens (Human).